The sequence spans 64 residues: Large ribosomal subunit protein uL30 (64 aa).

A disordered region spans residues 1–22 (MAKAAKTIKVEQTGSAIRRHHS).

This sequence belongs to the universal ribosomal protein uL30 family. In terms of assembly, part of the 50S ribosomal subunit.

This is Large ribosomal subunit protein uL30 from Nitrobacter winogradskyi (strain ATCC 25391 / DSM 10237 / CIP 104748 / NCIMB 11846 / Nb-255).